A 470-amino-acid polypeptide reads, in one-letter code: FAD-dependent monooxygenase nvfK (470 aa).

Residues 1-23 (MEKAKFKVVIVGGSITGLTLAHC) form the signal peptide. Residues E35, G49, and R108 each coordinate FAD. N-linked (GlcNAc...) asparagine glycosylation is present at N121. Y216 is a catalytic residue. Residues D308 and A321 each contribute to the FAD site. The helical transmembrane segment at 450-470 (ILMSIVLVAPAWVYIFSSLVW) threads the bilayer.

It belongs to the paxM FAD-dependent monooxygenase family. The cofactor is FAD.

The protein localises to the membrane. The catalysed reaction is (3R)-3-farnesyl-6-hydroxy-2,3,5-trimethyl-4-oxocyclohexa-1,5-diene-1-carboxylate + 2-oxoglutarate + O2 = (3R)-[(10S)-11-epoxyfarnesyl]-2,3,5-trimethyl-6-oxido-4-oxocyclohexa-1,5-diene-1-carboxylate + succinate + CO2. The protein operates within secondary metabolite biosynthesis; terpenoid biosynthesis. Its function is as follows. FAD-dependent monooxygenase; part of the gene cluster that mediates the biosynthesis of novofumigatonin, a heavily oxygenated meroterpenoid containing a unique orthoester moiety. The first step of the pathway is the synthesis of 3,5-dimethylorsellinic acid (DMOA) by the polyketide synthase nvfA via condensation of one acetyl-CoA starter unit with 3 malonyl-CoA units and 2 methylations. DMOA is then converted to farnesyl-DMOA by the farnesyltransferase nvfB. Epoxydation by FAD-dependent monooxygenase nvfK, followed by a protonation-initiated cyclization catalyzed by the terpene cyclase nvfL leads to the production of asnavolin H. The short chain dehydrogenase nvfC then as a 3-OH dehydrogenase of asnovolin H to yield chemesin D. There are two branches to synthesize asnovolin A from chemesin D. In one branch, chemesin D undergoes Baeyer-Villiger oxidation by nvfH, methylation by nvfJ, and enoyl reduction by the nvfM D enoylreductase that reduces the double bond between C-5'and C-6', to form respectively asnovolin I, asnovolin K, and asnovolin A. In the other branch, the methylation precedes the Baeyer-Villiger oxidation and the enoyl reduction to yield asnovolin A via the asnovolin J intermediate. Asnovolin A is further converted to fumigatonoid A by the Fe(II)/2-oxoglutarate-dependent dioxygenase nvfI that catalyzes an endoperoxidation reaction. The alpha/beta hydrolase nvfD then acts as an epimerase that converts fumigatonoid A to its C-5' epimer, which then undergoes spontaneous or nvfD-catalyzed lactonization. The following step utilizes the ketoreductase nvfG to produce fumigatonoid B. The dioxygenase nvfE further converts fumigatonoid B into fumigatonoid C. Finally the Fe(II)/2-oxoglutarate-dependent dioxygenase nvfF catalyzes two rounds of oxidation to transform fumigatonoid C into the end product, novofumigatonin A. The protein is FAD-dependent monooxygenase nvfK of Aspergillus novofumigatus (strain IBT 16806).